The chain runs to 162 residues: NADH-quinone oxidoreductase subunit I (162 aa).

4Fe-4S ferredoxin-type domains follow at residues 53–83 (LRRY…IEPE) and 93–122 (RRYD…EGPN). Positions 63, 66, 69, 73, 102, 105, 108, and 112 each coordinate [4Fe-4S] cluster.

Belongs to the complex I 23 kDa subunit family. In terms of assembly, NDH-1 is composed of 14 different subunits. Subunits NuoA, H, J, K, L, M, N constitute the membrane sector of the complex. The cofactor is [4Fe-4S] cluster.

Its subcellular location is the cell inner membrane. The enzyme catalyses a quinone + NADH + 5 H(+)(in) = a quinol + NAD(+) + 4 H(+)(out). NDH-1 shuttles electrons from NADH, via FMN and iron-sulfur (Fe-S) centers, to quinones in the respiratory chain. The immediate electron acceptor for the enzyme in this species is believed to be ubiquinone. Couples the redox reaction to proton translocation (for every two electrons transferred, four hydrogen ions are translocated across the cytoplasmic membrane), and thus conserves the redox energy in a proton gradient. The protein is NADH-quinone oxidoreductase subunit I of Paramagnetospirillum magneticum (strain ATCC 700264 / AMB-1) (Magnetospirillum magneticum).